The chain runs to 101 residues: Small ribosomal subunit protein uS14 (101 aa).

The tract at residues 1–21 is disordered; the sequence is MAKTSSVEKNNRRRKLADQYG.

This sequence belongs to the universal ribosomal protein uS14 family. As to quaternary structure, part of the 30S ribosomal subunit. Contacts proteins S3 and S10.

Binds 16S rRNA, required for the assembly of 30S particles and may also be responsible for determining the conformation of the 16S rRNA at the A site. In Mesorhizobium japonicum (strain LMG 29417 / CECT 9101 / MAFF 303099) (Mesorhizobium loti (strain MAFF 303099)), this protein is Small ribosomal subunit protein uS14.